Reading from the N-terminus, the 712-residue chain is Asp/Glu-specific dipeptidyl-peptidase (712 aa).

The signal sequence occupies residues 1–18 (MKRFFKMALFLGVSALYG). Active-site charge relay system residues include His84, Asp220, and Ser647.

Belongs to the peptidase S46 family.

In terms of biological role, catalyzes the removal of dipeptides from the N-terminus of oligopeptides. Shows a strict specificity for acidic residues (Asp or Glu) in the P1 position, and has probably a hydrophobic residue preference at the P2 position. Preferentially cleaves the synthetic substrate Leu-Asp-methylcoumaryl-7-amide (Leu-Asp-MCA) as compared to Leu-Glu-MCA. This chain is Asp/Glu-specific dipeptidyl-peptidase (dpp11), found in Capnocytophaga gingivalis.